A 196-amino-acid chain; its full sequence is Nucleoid occlusion factor SlmA (196 aa).

The HTH tetR-type domain occupies 6–66 (RNRREEILQA…GLIEFVEDTL (61 aa)). Residues 29–48 (TTAKLAANLGVSEAALYRHF) constitute a DNA-binding region (H-T-H motif). A coiled-coil region spans residues 108 to 135 (DALMGEHDRLRGRMEDLFNRIESSIKQI).

Belongs to the nucleoid occlusion factor SlmA family. Homodimer. Interacts with FtsZ.

It localises to the cytoplasm. Its subcellular location is the nucleoid. Required for nucleoid occlusion (NO) phenomenon, which prevents Z-ring formation and cell division over the nucleoid. Acts as a DNA-associated cell division inhibitor that binds simultaneously chromosomal DNA and FtsZ, and disrupts the assembly of FtsZ polymers. SlmA-DNA-binding sequences (SBS) are dispersed on non-Ter regions of the chromosome, preventing FtsZ polymerization at these regions. This chain is Nucleoid occlusion factor SlmA, found in Idiomarina loihiensis (strain ATCC BAA-735 / DSM 15497 / L2-TR).